Consider the following 514-residue polypeptide: Serine--tRNA ligase, cytoplasmic (514 aa).

M1 is modified (N-acetylmethionine). An interaction with tRNA region spans residues 9-61 (RVDKGGDPALIRETQEKRFKDPGLVDQLVKADSEWRRCRFRADNLNKLKNLCS). Phosphoserine is present on S241. T271 and R302 together coordinate L-serine. ATP is bound by residues 302–304 (RQE) and 318–321 (VHQF). Residue K323 is modified to N6-acetyllysine. L-serine is bound at residue E325. Residue 391–394 (ELVS) participates in ATP binding. Residue N427 coordinates L-serine. A disordered region spans residues 473–514 (PAPIEQEPSKKQKKQHEGSKKKAAARDVTLENRLQNMEVTDA). The span at 479-502 (EPSKKQKKQHEGSKKKAAARDVTL) shows a compositional bias: basic and acidic residues. Residues 482 to 494 (KKQKKQHEGSKKK) carry the Nuclear localization signal motif. The span at 504–514 (NRLQNMEVTDA) shows a compositional bias: polar residues.

This sequence belongs to the class-II aminoacyl-tRNA synthetase family. Type-1 seryl-tRNA synthetase subfamily. In terms of assembly, homodimer. The tRNA molecule may bind across the dimer. Interacts with SIRT2. Interacts with METTL6; interaction is required for the tRNA N(3)-methylcytidine methyltransferase activity of METTL6. Brain.

It is found in the cytoplasm. It localises to the nucleus. It catalyses the reaction tRNA(Ser) + L-serine + ATP = L-seryl-tRNA(Ser) + AMP + diphosphate + H(+). It carries out the reaction tRNA(Sec) + L-serine + ATP = L-seryl-tRNA(Sec) + AMP + diphosphate + H(+). The protein operates within aminoacyl-tRNA biosynthesis; selenocysteinyl-tRNA(Sec) biosynthesis; L-seryl-tRNA(Sec) from L-serine and tRNA(Sec): step 1/1. Functionally, catalyzes the attachment of serine to tRNA(Ser) in a two-step reaction: serine is first activated by ATP to form Ser-AMP and then transferred to the acceptor end of tRNA(Ser). Is probably also able to aminoacylate tRNA(Sec) with serine, to form the misacylated tRNA L-seryl-tRNA(Sec), which will be further converted into selenocysteinyl-tRNA(Sec). In the nucleus, binds to the VEGFA core promoter and prevents MYC binding and transcriptional activation by MYC. Recruits SIRT2 to the VEGFA promoter, promoting deacetylation of histone H4 at 'Lys-16' (H4K16). Thereby, inhibits the production of VEGFA and sprouting angiogenesis mediated by VEGFA. This chain is Serine--tRNA ligase, cytoplasmic, found in Homo sapiens (Human).